We begin with the raw amino-acid sequence, 143 residues long: Deoxyuridine 5'-triphosphate nucleotidohydrolase (143 aa).

Substrate is bound by residues 62–64, Asn-75, 79–81, and Lys-89; these read RSG and TID.

Belongs to the dUTPase family. The cofactor is Mg(2+).

The catalysed reaction is dUTP + H2O = dUMP + diphosphate + H(+). It participates in pyrimidine metabolism; dUMP biosynthesis; dUMP from dCTP (dUTP route): step 2/2. Its function is as follows. This enzyme is involved in nucleotide metabolism: it produces dUMP, the immediate precursor of thymidine nucleotides and it decreases the intracellular concentration of dUTP so that uracil cannot be incorporated into DNA. This chain is Deoxyuridine 5'-triphosphate nucleotidohydrolase, found in Clostridium kluyveri (strain ATCC 8527 / DSM 555 / NBRC 12016 / NCIMB 10680 / K1).